A 256-amino-acid polypeptide reads, in one-letter code: Ubiquinone/menaquinone biosynthesis C-methyltransferase UbiE (256 aa).

2 residues coordinate S-adenosyl-L-methionine: T78 and D99.

It belongs to the class I-like SAM-binding methyltransferase superfamily. MenG/UbiE family.

The catalysed reaction is a 2-demethylmenaquinol + S-adenosyl-L-methionine = a menaquinol + S-adenosyl-L-homocysteine + H(+). It catalyses the reaction a 2-methoxy-6-(all-trans-polyprenyl)benzene-1,4-diol + S-adenosyl-L-methionine = a 5-methoxy-2-methyl-3-(all-trans-polyprenyl)benzene-1,4-diol + S-adenosyl-L-homocysteine + H(+). It functions in the pathway quinol/quinone metabolism; menaquinone biosynthesis; menaquinol from 1,4-dihydroxy-2-naphthoate: step 2/2. Its pathway is cofactor biosynthesis; ubiquinone biosynthesis. Functionally, methyltransferase required for the conversion of demethylmenaquinol (DMKH2) to menaquinol (MKH2) and the conversion of 2-polyprenyl-6-methoxy-1,4-benzoquinol (DDMQH2) to 2-polyprenyl-3-methyl-6-methoxy-1,4-benzoquinol (DMQH2). This chain is Ubiquinone/menaquinone biosynthesis C-methyltransferase UbiE, found in Geobacter sulfurreducens (strain ATCC 51573 / DSM 12127 / PCA).